Reading from the N-terminus, the 279-residue chain is Thymidylate synthase (279 aa).

Arginine 21 provides a ligand contact to dUMP. Residue histidine 51 participates in (6R)-5,10-methylene-5,6,7,8-tetrahydrofolate binding. 126-127 (RR) lines the dUMP pocket. The active-site Nucleophile is cysteine 159. DUMP is bound by residues 179 to 182 (RSAD), asparagine 190, and 220 to 222 (HLY). Residue aspartate 182 participates in (6R)-5,10-methylene-5,6,7,8-tetrahydrofolate binding. (6R)-5,10-methylene-5,6,7,8-tetrahydrofolate is bound at residue alanine 278.

The protein belongs to the thymidylate synthase family. Bacterial-type ThyA subfamily. Homodimer.

Its subcellular location is the cytoplasm. The catalysed reaction is dUMP + (6R)-5,10-methylene-5,6,7,8-tetrahydrofolate = 7,8-dihydrofolate + dTMP. It participates in pyrimidine metabolism; dTTP biosynthesis. Its function is as follows. Catalyzes the reductive methylation of 2'-deoxyuridine-5'-monophosphate (dUMP) to 2'-deoxythymidine-5'-monophosphate (dTMP) while utilizing 5,10-methylenetetrahydrofolate (mTHF) as the methyl donor and reductant in the reaction, yielding dihydrofolate (DHF) as a by-product. This enzymatic reaction provides an intracellular de novo source of dTMP, an essential precursor for DNA biosynthesis. This is Thymidylate synthase from Marinobacter nauticus (strain ATCC 700491 / DSM 11845 / VT8) (Marinobacter aquaeolei).